The primary structure comprises 216 residues: Adenylate kinase (216 aa).

10–15 contacts ATP; the sequence is GAGKGT. Residues 30-59 form an NMP region; sequence STGDMLRAAVKAETPVGLKAKAVMEAGQLV. AMP is bound by residues Thr-31, Arg-36, 57–59, 85–88, and Gln-92; these read QLV and GYPR. The interval 126-164 is LID; it reads GRYTCATCGKGYHDKFEKPAVEGTCDKCGGHEFKRRPDD. Arg-127 contacts ATP. 4 residues coordinate Zn(2+): Cys-130, Cys-133, Cys-150, and Cys-153. Arg-161 and Arg-172 together coordinate AMP. Residue Ala-200 coordinates ATP.

Belongs to the adenylate kinase family. As to quaternary structure, monomer.

It localises to the cytoplasm. It carries out the reaction AMP + ATP = 2 ADP. Its pathway is purine metabolism; AMP biosynthesis via salvage pathway; AMP from ADP: step 1/1. Its function is as follows. Catalyzes the reversible transfer of the terminal phosphate group between ATP and AMP. Plays an important role in cellular energy homeostasis and in adenine nucleotide metabolism. The polypeptide is Adenylate kinase (Novosphingobium aromaticivorans (strain ATCC 700278 / DSM 12444 / CCUG 56034 / CIP 105152 / NBRC 16084 / F199)).